Reading from the N-terminus, the 497-residue chain is Gasdermin-E (497 aa).

The interval 1 to 56 (MFAKATRSFLREVDAEGDLIAVSNLNDSDKSQLLSLVTKKKRFWCWQRPKYQFLSV) is membrane targeting domain. The residue at position 45 (Cys-45) is an S-(2-succinyl)cysteine. Lys-120 is covalently cross-linked (Glycyl lysine isopeptide (Lys-Gly) (interchain with G-Cter in ubiquitin)). Residues Cys-156, Cys-168, and Cys-180 each carry the S-(2-succinyl)cysteine modification. Residue Lys-189 forms a Glycyl lysine isopeptide (Lys-Gly) (interchain with G-Cter in ubiquitin) linkage. Residues Cys-235, Cys-371, Cys-409, Cys-418, and Cys-491 each carry the S-(2-succinyl)cysteine modification.

It belongs to the gasdermin family. In terms of assembly, homooligomer; homooligomeric ring-shaped pore complex containing 27-28 subunits when inserted in the membrane. In terms of processing, cleavage at Asp-270 by CASP3 (mature and uncleaved precursor forms) or granzyme B (GZMB) relieves autoinhibition and is sufficient to initiate pyroptosis. Post-translationally, succination by the Krebs cycle intermediate fumarate, which leads to S-(2-succinyl)cysteine residues, inhibits processing by caspases, and ability to initiate pyroptosis. Succination modification is catalyzed by a non-enzymatic reaction caused by an accumulation of fumarate. Ubiquitinated on Lys-120 and Lys-189 via 'Lys-48'-linked polyubiquitin chains, leading to proteasomal degradation. Deubiquitinated by USP48, leading to increased stability. In terms of processing, palmitoylated.

The protein localises to the cell membrane. It is found in the cytoplasm. The protein resides in the cytosol. With respect to regulation, the full-length protein before cleavage is inactive: intramolecular interactions between N- and C-terminal domains mediate autoinhibition in the absence of activation signal. The intrinsic pyroptosis-inducing activity is carried by the released N-terminal moiety (Gasdermin-E, N-terminal) following cleavage by CASP3 or granzyme B (GZMB). Activated by NLRP1 in the absence of GSDMD expression: NLRP1 cleaves and activates CASP8, promoting downstream activation of CASP3 and subsequent activation of GSDME. Functionally, precursor of a pore-forming protein that converts non-inflammatory apoptosis to pyroptosis. This form constitutes the precursor of the pore-forming protein: upon cleavage, the released N-terminal moiety (Gasdermin-E, N-terminal) binds to membranes and forms pores, triggering pyroptosis. In terms of biological role, pore-forming protein produced by cleavage by CASP3 or granzyme B (GZMB), which converts non-inflammatory apoptosis to pyroptosis or promotes granzyme-mediated pyroptosis, respectively. After cleavage, moves to the plasma membrane, homooligomerizes within the membrane and forms pores of 10-15 nanometers (nm) of inner diameter, allowing the release of mature interleukins (IL1B and IL16) and triggering pyroptosis. Binds to inner leaflet lipids, bisphosphorylated phosphatidylinositols, such as phosphatidylinositol (4,5)-bisphosphate. Cleavage by CASP3 switches CASP3-mediated apoptosis induced by TNF or danger signals, such as chemotherapy drugs, to pyroptosis. Mediates secondary necrosis downstream of the mitochondrial apoptotic pathway and CASP3 activation as well as in response to viral agents. Exhibits bactericidal activity. Cleavage by GZMB promotes tumor suppressor activity by triggering robust anti-tumor immunity. Suppresses tumors by mediating granzyme-mediated pyroptosis in target cells of natural killer (NK) cells: cleavage by granzyme B (GZMB), delivered to target cells from NK-cells, triggers pyroptosis of tumor cells and tumor suppression. May play a role in the p53/TP53-regulated cellular response to DNA damage. The protein is Gasdermin-E of Equus caballus (Horse).